Consider the following 614-residue polypeptide: MEKRTDYCGNITEKYIGQDVNLYGWVQRVRNLGNLVFIDLRDREGLVQIVVNKDSGKDLMEIANSLGNEYVIQVRGKVVKRSEANPDMKTGQVEVDATEIIILNEAKNPPFEIKDGVEISEQTRLKYRYLDLRRPEVQKAIILRSKILRATHEFFDENGFIDIETPILGKSSPEGARDYLVPSRIYPGSFYALPQSPQLFKQLLMGAGFDKYYQLARCFRDEDLRGDRQPEFTQIDMEMSFADEQTIQDYTEGLLKKIMKDVMGIDLKTPIKRMSWTDSMNKYGCDKPDTRYGMLIHDLSSIFKDSDFKVFSGAIADGGFVKGIAVKNGAKEYSRKKIDKKADFIKRFHAKGLAWVKFEDGEFSGPVARFLTDENKEALKKEFDLEGGELVVFVADKWKVVCDSLDHLRREFAKETGIIPKGVYDFVWVVDWPLFEYDEGLGRWVAAHHPFTMPDDEGVKLLTTDPHKAHARSYDIVMNGDEMGGGSIRIHKRSIQEDMFKALGFTKKRAYEQFGYLMDAFDMGFPPHAGLAIGLDRFAMMLAGKDNIRDVLAFPKNASASEPMMHAPAPVADQQLADLGIEVEKQYEDSVKATEERLEKMAAEDAEENSTWDK.

Glu174 provides a ligand contact to L-aspartate. An aspartate region spans residues 198 to 201 (QLFK). L-aspartate is bound at residue Arg220. ATP is bound by residues 220 to 222 (RDE) and Gln229. Residue His448 coordinates L-aspartate. Glu482 provides a ligand contact to ATP. L-aspartate is bound at residue Arg489. 534–537 (GLDR) provides a ligand contact to ATP.

The protein belongs to the class-II aminoacyl-tRNA synthetase family. Type 1 subfamily. Homodimer.

Its subcellular location is the cytoplasm. It carries out the reaction tRNA(Asp) + L-aspartate + ATP = L-aspartyl-tRNA(Asp) + AMP + diphosphate. Its function is as follows. Catalyzes the attachment of L-aspartate to tRNA(Asp) in a two-step reaction: L-aspartate is first activated by ATP to form Asp-AMP and then transferred to the acceptor end of tRNA(Asp). The protein is Aspartate--tRNA ligase of Lactobacillus acidophilus (strain ATCC 700396 / NCK56 / N2 / NCFM).